Consider the following 129-residue polypeptide: MAFEFPAAYRFADSHEYAHLDGELIRVGISAFAVDQLGDIVFVDLPDVGASLDKGTSFGSVESVKAVEDMYAPIAGEVVERNEAVLASPEELQNDPHGAGWLLVVRPSDPAQLETLLDSATYSAKVNAG.

One can recognise a Lipoyl-binding domain in the interval Leu-24–Arg-106. Lys-65 is subject to N6-lipoyllysine.

Belongs to the GcvH family. In terms of assembly, the glycine cleavage system is composed of four proteins: P, T, L and H. The cofactor is (R)-lipoate.

Functionally, the glycine cleavage system catalyzes the degradation of glycine. The H protein shuttles the methylamine group of glycine from the P protein to the T protein. This is Glycine cleavage system H protein from Synechococcus sp. (strain CC9902).